The primary structure comprises 514 residues: Peptide chain release factor 3 (514 aa).

Positions lysine 8–histidine 268 constitute a tr-type G domain. GTP-binding positions include serine 17–threonine 24, aspartate 85–histidine 89, and asparagine 139–aspartate 142.

This sequence belongs to the TRAFAC class translation factor GTPase superfamily. Classic translation factor GTPase family. PrfC subfamily.

Its subcellular location is the cytoplasm. Functionally, increases the formation of ribosomal termination complexes and stimulates activities of RF-1 and RF-2. It binds guanine nucleotides and has strong preference for UGA stop codons. It may interact directly with the ribosome. The stimulation of RF-1 and RF-2 is significantly reduced by GTP and GDP, but not by GMP. The polypeptide is Peptide chain release factor 3 (Streptococcus pneumoniae (strain 70585)).